The sequence spans 283 residues: Prolyl 4-hydroxylase 1 (283 aa).

At 1 to 6 (MAPAMK) the chain is on the cytoplasmic side. The helical; Signal-anchor for type II membrane protein transmembrane segment at 7–27 (IVFGLLTFVTVGMVIGSLLQL) threads the bilayer. Residues 28–283 (AFINRLEDSY…TKWMRQKATS (256 aa)) lie on the Lumenal side of the membrane. One can recognise a Fe2OG dioxygenase domain in the interval 162 to 279 (NGELIQVLRY…KWSATKWMRQ (118 aa)). Histidine 180, aspartate 182, and histidine 260 together coordinate Fe cation. Lysine 270 serves as a coordination point for 2-oxoglutarate.

This sequence belongs to the P4HA family. It depends on Fe(2+) as a cofactor. Requires L-ascorbate as cofactor.

The protein resides in the endoplasmic reticulum membrane. It catalyses the reaction L-prolyl-[collagen] + 2-oxoglutarate + O2 = trans-4-hydroxy-L-prolyl-[collagen] + succinate + CO2. Catalyzes the post-translational formation of 4-hydroxyproline in -Xaa-Pro-Gly- sequences in proline-rich peptide sequences of plant glycoproteins and other proteins. Hydroxylates preferentially prolines in second positions in the -Pro-Pro-Gly-triplets. Hydroxyprolines are important constituent of many plant cell wall glycoproteins such as extensins, hydroxyproline-rich glycoproteins, lectins and arabinogalactan proteins. Can hydroxylate collagen-like peptides and hypoxia-inducible transcription factor peptides. The chain is Prolyl 4-hydroxylase 1 from Arabidopsis thaliana (Mouse-ear cress).